The chain runs to 601 residues: AT-rich interactive domain-containing protein 3A (601 aa).

The interval 1–224 (MKLQAVMETL…HMASQMPPPD (224 aa)) is disordered. Positions 60–89 (MAALAAMRAAAAGLGHPSSPGGSEDGPPIS) are enriched in low complexity. Phosphoserine occurs at positions 78, 82, and 89. Thr99 bears the Phosphothreonine mark. Position 102 is a phosphoserine (Ser102). The segment covering 114–123 (GHAEGDRHLM) has biased composition (basic and acidic residues). Position 127 is a phosphoserine (Ser127). The interval 128–165 (DDDDTKSKWEEQELEELGEEEEEEEEEDDFEEEEEEEE) is acidic. The segment covering 139–166 (QELEELGEEEEEEEEEDDFEEEEEEEEG) has biased composition (acidic residues). The 93-residue stretch at 243 to 335 (DPKRKEFLDD…YLYPYECERR (93 aa)) folds into the ARID domain. A phosphoserine mark is found at Ser358 and Ser367. Glycyl lysine isopeptide (Lys-Gly) (interchain with G-Cter in SUMO2) cross-links involve residues Lys403, Lys404, Lys457, and Lys467. The REKLES domain maps to 449–546 (AALEQLREKL…GVLFAQPPPP (98 aa)). Residues 450–493 (ALEQLREKLESTEPPEKKMALVADEQQRLMQRAVQQSFLAMTAQ) are important for nuclear localization. The tract at residues 495–518 (PMNIRINSQASESRQDSAVSLTSA) is homodimerization. The segment at 542-562 (QPPPPTAPSAPGKGGVSSIGT) is important for cytoplasmic localization. A disordered region spans residues 545–601 (PPTAPSAPGKGGVSSIGTNTTTGSRTGASGSTVSGGQVGLPGVSTPTMSSTSNNSLP). Composition is skewed to low complexity over residues 559 to 579 (SIGTNTTTGSRTGASGSTVSG) and 588 to 601 (STPTMSSTSNNSLP).

In terms of assembly, homodimer. Heterodimer with ARID3B. Interacts with E2F1. Interacts with GTF2I and BTK. B-cell specific in the adult. Expressed in B-cell progenitors, down-regulated in the immature B-cell stage, and is up-regulated again at later stages of B-lymphocyte differentiation.

It is found in the nucleus. The protein resides in the cytoplasm. Functionally, transcription factor involved in B-cell differentiation. Binds a VH promoter proximal site necessary for induced mu-heavy-chain transcription. Binds the minor groove of a restricted ATC sequence that is sufficient for nuclear matrix association. This sequence motif is present in matrix-associating regions (MARS) proximal to the promoter and flanking E mu. Activates E mu-driven transcription by binding these sites. May be involved in the control of cell cycle progression by the RB1/E2F1 pathway. The protein is AT-rich interactive domain-containing protein 3A (Arid3a) of Mus musculus (Mouse).